The chain runs to 134 residues: MPPKSRAGAVKKVRRKEKKNVAHGQAHIKSTFNNTIVSITDPTGAVISWASAGHVGFKGSRKSTPFAAQMAAENAARKAAEHGMKKVDVFVKGPGSGRETAIRSLQAAGLEVGTIQDVTPQPHNGCRPPKRRRV.

Disordered regions lie at residues 1–24 and 115–134; these read MPPKSRAGAVKKVRRKEKKNVAHG and IQDVTPQPHNGCRPPKRRRV. Over residues 9–18 the composition is skewed to basic residues; the sequence is AVKKVRRKEK.

This sequence belongs to the universal ribosomal protein uS11 family. Part of the 30S ribosomal subunit. Interacts with proteins S7 and S18. Binds to IF-3.

Located on the platform of the 30S subunit, it bridges several disparate RNA helices of the 16S rRNA. Forms part of the Shine-Dalgarno cleft in the 70S ribosome. The sequence is that of Small ribosomal subunit protein uS11 from Saccharopolyspora erythraea (strain ATCC 11635 / DSM 40517 / JCM 4748 / NBRC 13426 / NCIMB 8594 / NRRL 2338).